The primary structure comprises 365 residues: Serpentine receptor class epsilon-38 (365 aa).

A run of 7 helical transmembrane segments spans residues 26-46, 65-85, 124-144, 168-188, 196-216, 256-276, and 285-305; these read GMYL…GVII, IMTA…LLII, ALVI…FGIL, IPVF…YFVL, LGTS…LAVW, LVIV…CLVI, and IFIH…CSTL.

It belongs to the nematode receptor-like protein sre family.

It is found in the membrane. The sequence is that of Serpentine receptor class epsilon-38 (sre-38) from Caenorhabditis elegans.